A 638-amino-acid polypeptide reads, in one-letter code: Growth hormone receptor (638 aa).

The signal sequence occupies residues 1 to 18; it reads MDLWQLLLTVALAGSSDA. Over 19 to 264 the chain is Extracellular; it reads FSGSEATPAT…SPFTCEEDFR (246 aa). The tract at residues 30 to 51 is disordered; it reads GRASESVQRVHPGLGTNSSGKP. A glycan (N-linked (GlcNAc...) asparagine) is linked at N46. 2 disulfides stabilise this stretch: C56/C66 and C101/C112. N-linked (GlcNAc...) asparagine glycosylation is present at N115. Residues C126 and C140 are joined by a disulfide bond. Residues 151-254 form the Fibronectin type-III domain; sequence PPIGLNWTLL…EVLYVTLPQM (104 aa). N-linked (GlcNAc...) asparagine glycans are attached at residues N156, N161, and N200. Positions 240–244 match the WSXWS motif motif; that stretch reads YGEFS. The tract at residues 260–262 is required for ADAM17-mediated proteolysis; sequence EED. Residues 265–288 form a helical membrane-spanning segment; sequence FPWFLIIIFGIFGLTVMLFVFIFS. Over 289–638 the chain is Cytoplasmic; that stretch reads KQQRIKMLIL…STDQLNKILP (350 aa). The tract at residues 294–379 is required for JAK2 binding; it reads KMLILPPVPV…HQKSLSVLAA (86 aa). Positions 297–305 match the Box 1 motif motif; it reads ILPPVPVPK. The UbE motif motif lies at 340-349; sequence DSWVEFIELD. Position 341 is a phosphoserine (S341). Residue Y487 is modified to Phosphotyrosine. The disordered stretch occupies residues 573 to 592; that stretch reads TTTAERSGTAEDAPGSEMPV. Y595 carries the phosphotyrosine modification.

It belongs to the type I cytokine receptor family. Type 1 subfamily. In terms of assembly, on growth hormone (GH) binding, forms homodimers and binds JAK2 via a box 1-containing domain. Post-translationally, the soluble form (GHBP) is produced by phorbol ester-promoted proteolytic cleavage at the cell surface (shedding) by ADAM17/TACE. Shedding is inhibited by growth hormone (GH) binding to the receptor probably due to a conformational change in GHR rendering the receptor inaccessible to ADAM17. In terms of processing, on GH binding, phosphorylated on tyrosine residues in the cytoplasmic domain by JAK2. Ubiquitinated by the ECS(SOCS2) complex following ligand-binding and phosphorylation by JAK2, leading to its degradation by the proteasome. Regulation by the ECS(SOCS2) complex acts as a negative feedback loop of growth hormone receptor signaling. Ubiquitination is not sufficient for GHR internalization.

The protein resides in the cell membrane. The protein localises to the secreted. In terms of biological role, receptor for pituitary gland growth hormone involved in regulating postnatal body growth. On ligand binding, couples to, and activates the JAK2/STAT5 pathway. The soluble form acts as a reservoir of growth hormone in plasma and may be a modulator/inhibitor of GH signaling. The sequence is that of Growth hormone receptor from Oryctolagus cuniculus (Rabbit).